The chain runs to 525 residues: Sensory neuron membrane protein 1 (525 aa).

Residues 1–11 (MLLPKELKYAA) lie on the Cytoplasmic side of the membrane. The helical transmembrane segment at 12–32 (IAGGVAVFGLIFGWVLFPVIL) threads the bilayer. Topologically, residues 33–456 (KGQLKKEMAL…LKHQLFIPKR (424 aa)) are extracellular. N-linked (GlcNAc...) asparagine glycosylation is found at asparagine 67, asparagine 229, and asparagine 324. 3 disulfide bridges follow: cysteine 268–cysteine 333, cysteine 297–cysteine 352, and cysteine 335–cysteine 341. Asparagine 440 is a glycosylation site (N-linked (GlcNAc...) asparagine). A helical membrane pass occupies residues 457–477 (VVGVLRWWMVSFGSLGADIGI). Residues 478-525 (VYHFRDHIMRLAVSGDTKVSKVTPEEDPEQKDISVIGPPAQEPAKINI) lie on the Cytoplasmic side of the membrane. Positions 497 to 525 (SKVTPEEDPEQKDISVIGPPAQEPAKINI) are disordered.

Belongs to the CD36 family.

The protein localises to the cell membrane. Its function is as follows. Plays an olfactory role that is not restricted to pheromone sensitivity. This is Sensory neuron membrane protein 1 from Mamestra brassicae (Cabbage moth).